The sequence spans 556 residues: Man(5)GlcNAc(2)-PP-dolichol translocation protein RFT1 (556 aa).

12 helical membrane passes run 10–30, 41–61, 91–111, 129–149, 156–176, 184–204, 353–373, 389–409, 440–460, 461–477, 489–509, and 517–537; these read LLGAGFSIIFQILCRILTFGI, EVLGIMNVRLLLLESTLLFLS, LTVPICAVLCAPCLYIWLNWL, VAFSCVLELMAESAVFVAQVF, ILLNTLHILVRSAIFLWIVTG, AFAIAQLSSAVTIVLGQYGFF, SVLNNLLLGVSSIGLIAFTFG, FVAGGLPQSLLQWHCLAIYLL, VSFLVLSYILTGIFGPVGFIF, ANCINMLSRILYSTYYI, LLGLWPGKLFGCTLFLAGIVC, and LATHLGVGVLAGLACLLSWAL.

This sequence belongs to the RFT1 family.

The protein resides in the endoplasmic reticulum membrane. It functions in the pathway protein modification; protein glycosylation. Its function is as follows. Intramembrane glycolipid transporter that operates in the biosynthetic pathway of dolichol-linked oligosaccharides, the glycan precursors employed in protein asparagine (N)-glycosylation. The sequential addition of sugars to dolichol pyrophosphate produces dolichol-linked oligosaccharides containing fourteen sugars, including two GlcNAcs, nine mannoses and three glucoses. Once assembled, the oligosaccharide is transferred from the lipid to nascent proteins by oligosaccharyltransferases. The assembly of dolichol-linked oligosaccharides begins on the cytosolic side of the endoplasmic reticulum membrane and finishes in its lumen. RFT1 could mediate the translocation of the cytosolically oriented intermediate DolPP-GlcNAc2Man5, produced by ALG11, into the ER lumen where dolichol-linked oligosaccharides assembly continues. However, the intramembrane lipid transporter activity could not be confirmed in vitro. The chain is Man(5)GlcNAc(2)-PP-dolichol translocation protein RFT1 from Drosophila melanogaster (Fruit fly).